Here is a 359-residue protein sequence, read N- to C-terminus: EGF-like domain containing protein 2 (359 aa).

An N-terminal signal peptide occupies residues 1 to 20; sequence MPPFISHFFLLSTFASLALC. EGF-like domains lie at 21 to 55 and 61 to 93; these read SFYCKNPGYPCLNGGTCLYNGECNCTSGFRGFNCG and ISAACTVECHNKGICYNGDKCYCTKDYMGPTCQ. 6 disulfide bridges follow: C24/C37, C31/C43, C45/C54, C65/C75, C69/C81, and C83/C92.

Prismatic layer of shell (at protein level). Expressed primarily in the mantle with highest level in the mantle edge and lower level in the mantle pallium.

The protein localises to the secreted. The polypeptide is EGF-like domain containing protein 2 (Margaritifera margaritifera (Freshwater pearl mussel)).